Here is a 474-residue protein sequence, read N- to C-terminus: tRNA-2-methylthio-N(6)-dimethylallyladenosine synthase (474 aa).

One can recognise an MTTase N-terminal domain in the interval K3–I120. Residues C12, C49, C83, C157, C161, and C164 each coordinate [4Fe-4S] cluster. One can recognise a Radical SAM core domain in the interval R143–R382. Positions V381–R444 constitute a TRAM domain.

It belongs to the methylthiotransferase family. MiaB subfamily. In terms of assembly, monomer. [4Fe-4S] cluster serves as cofactor.

Its subcellular location is the cytoplasm. It catalyses the reaction N(6)-dimethylallyladenosine(37) in tRNA + (sulfur carrier)-SH + AH2 + 2 S-adenosyl-L-methionine = 2-methylsulfanyl-N(6)-dimethylallyladenosine(37) in tRNA + (sulfur carrier)-H + 5'-deoxyadenosine + L-methionine + A + S-adenosyl-L-homocysteine + 2 H(+). Catalyzes the methylthiolation of N6-(dimethylallyl)adenosine (i(6)A), leading to the formation of 2-methylthio-N6-(dimethylallyl)adenosine (ms(2)i(6)A) at position 37 in tRNAs that read codons beginning with uridine. This Nitrosospira multiformis (strain ATCC 25196 / NCIMB 11849 / C 71) protein is tRNA-2-methylthio-N(6)-dimethylallyladenosine synthase.